An 82-amino-acid polypeptide reads, in one-letter code: MSSSIFDKVQNIVANQLGVEKDKVTEDAKFAALGADSLDTVELVMAIEDAFSIDIPDEDAEKIANLSQAIEFIQHAIDKKKD.

The Carrier domain occupies serine 3–isoleucine 77. Serine 37 is subject to O-(pantetheine 4'-phosphoryl)serine.

It belongs to the acyl carrier protein (ACP) family. Post-translationally, 4'-phosphopantetheine is transferred from CoA to a specific serine of apo-ACP by AcpS. This modification is essential for activity because fatty acids are bound in thioester linkage to the sulfhydryl of the prosthetic group.

It localises to the plastid. The protein resides in the chloroplast. It participates in lipid metabolism; fatty acid biosynthesis. Its function is as follows. Carrier of the growing fatty acid chain in fatty acid biosynthesis. The sequence is that of Acyl carrier protein from Gracilaria tenuistipitata var. liui (Red alga).